The chain runs to 520 residues: Acetyltransferase MAT1 (520 aa).

Residues H183 and D456 each act as proton acceptor in the active site.

This sequence belongs to the plant acyltransferase family.

Its pathway is secondary metabolite biosynthesis. Functionally, acyl-CoA-dependent acyltransferase; part of the gene cluster that mediates the biosynthesis of mannosylerythritol lipids (MELs), surface-active substances that enhance the availability of water-insoluble substrates. Depending on the number of acetyl groups, mannosylerythritol lipids can be differentiated into MEL A (fully acetylated), MEL B and MEL C (monoacetylated at R-6 and R-4, respectively), and the fully deacetylated MEL D. The first step in the pathway is the generation of mannosylerythritol by the glycosyltransferase EMT1 which catalyzes the transfer of GDP-mannose to the C-4 atom of meso-erythritol. This reaction has to be stereospecific, since only mannosyl-D-erythritol is generated. The produced disaccharide is subsequently acylated with fatty acids of various lengths by the acyltransferases MAC1 and MAC2 at positions C-2 and C-3, repectively. The existence of MEL derivatives which carry an acetyl group at C-2 implies that at least MAC1 also accepts acetyl-CoA as a donor. The final step of MEL biosynthesis is the acetylation of the fully acylated mannosylerythritol lipids catalyzed by the acetyl-CoA-dependent acetyltransferase MAT1. MAT1 displays a relaxed regioselectivity and is able to transfer acetylgroups to both positions C-4 and C-6 of the mannosyl moiety. The polypeptide is Acetyltransferase MAT1 (Pseudozyma antarctica (strain T-34) (Yeast)).